Consider the following 146-residue polypeptide: Hemoglobin subunit beta (146 aa).

An N-acetylvaline modification is found at V1. Positions 2–146 (HLSAEEKAAV…VANALAHKYH (145 aa)) constitute a Globin domain. A Phosphothreonine modification is found at T12. At S44 the chain carries Phosphoserine. K59 bears the N6-acetyllysine mark. Heme b is bound at residue H63. N6-acetyllysine is present on K82. Residue H92 coordinates heme b. C93 is subject to S-nitrosocysteine. At K144 the chain carries N6-acetyllysine.

This sequence belongs to the globin family. As to quaternary structure, heterotetramer of two alpha chains and two beta chains. As to expression, red blood cells.

In terms of biological role, involved in oxygen transport from the lung to the various peripheral tissues. This chain is Hemoglobin subunit beta (HBB), found in Ctenodactylus gundi (Northern gundi).